Here is a 202-residue protein sequence, read N- to C-terminus: Ras-related protein Rab-1A (202 aa).

GTP contacts are provided by residues glycine 15–cysteine 23, tyrosine 33–threonine 40, aspartate 63–glutamine 67, asparagine 121–aspartate 124, and serine 151–lysine 153. The short motif at phenylalanine 37–phenylalanine 45 is the Effector region element. Residues glutamine 180–cysteine 202 are disordered. 2 S-geranylgeranyl cysteine lipidation sites follow: cysteine 201 and cysteine 202.

It belongs to the small GTPase superfamily. Rab family.

The protein resides in the cell membrane. This Dictyostelium discoideum (Social amoeba) protein is Ras-related protein Rab-1A (rab1A).